We begin with the raw amino-acid sequence, 208 residues long: Protein-L-isoaspartate O-methyltransferase (208 aa).

Residue Ser-59 is part of the active site.

This sequence belongs to the methyltransferase superfamily. L-isoaspartyl/D-aspartyl protein methyltransferase family.

The protein resides in the cytoplasm. The enzyme catalyses [protein]-L-isoaspartate + S-adenosyl-L-methionine = [protein]-L-isoaspartate alpha-methyl ester + S-adenosyl-L-homocysteine. Its function is as follows. Catalyzes the methyl esterification of L-isoaspartyl residues in peptides and proteins that result from spontaneous decomposition of normal L-aspartyl and L-asparaginyl residues. It plays a role in the repair and/or degradation of damaged proteins. In Vibrio cholerae serotype O1 (strain ATCC 39541 / Classical Ogawa 395 / O395), this protein is Protein-L-isoaspartate O-methyltransferase.